The following is a 291-amino-acid chain: Oxidative stress-responsive serine-rich protein 1 (291 aa).

Residues 44-139 (RTTVDDTKPK…STGENSTSLD (96 aa)) form a disordered region. Basic residues predominate over residues 65 to 83 (STRKSSRGAVRIQRRRRSK). Polar residues-rich tracts occupy residues 95-113 (CSTT…SQTE) and 127-139 (KEFS…TSLD). Position 143 is a phosphothreonine (threonine 143).

As to expression, ubiquitous with high level in testis, placenta and cardiac myocytes. In terms of tissue distribution, expressed in testis, unpreganant uterus and cardiac myocytes.

The chain is Oxidative stress-responsive serine-rich protein 1 (Oser1) from Rattus norvegicus (Rat).